The sequence spans 384 residues: Putative 8-amino-7-oxononanoate synthase (384 aa).

Arg19 is a substrate binding site. 106 to 107 (GY) contacts pyridoxal 5'-phosphate. His131 serves as a coordination point for substrate. Residues Ser177, 202–205 (DDAH), and 233–236 (TLSK) contribute to the pyridoxal 5'-phosphate site. Residue Lys236 is modified to N6-(pyridoxal phosphate)lysine.

It belongs to the class-II pyridoxal-phosphate-dependent aminotransferase family. BioF subfamily. In terms of assembly, homodimer. Pyridoxal 5'-phosphate serves as cofactor.

It carries out the reaction 6-carboxyhexanoyl-[ACP] + L-alanine + H(+) = (8S)-8-amino-7-oxononanoate + holo-[ACP] + CO2. It functions in the pathway cofactor biosynthesis; biotin biosynthesis. Its function is as follows. Catalyzes the decarboxylative condensation of pimeloyl-[acyl-carrier protein] and L-alanine to produce 8-amino-7-oxononanoate (AON), [acyl-carrier protein], and carbon dioxide. The sequence is that of Putative 8-amino-7-oxononanoate synthase (bioF) from Desulforudis audaxviator (strain MP104C).